The chain runs to 346 residues: N-acetyl-gamma-glutamyl-phosphate reductase (346 aa).

C149 is a catalytic residue.

The protein belongs to the NAGSA dehydrogenase family. Type 1 subfamily.

The protein localises to the cytoplasm. The enzyme catalyses N-acetyl-L-glutamate 5-semialdehyde + phosphate + NADP(+) = N-acetyl-L-glutamyl 5-phosphate + NADPH + H(+). It participates in amino-acid biosynthesis; L-arginine biosynthesis; N(2)-acetyl-L-ornithine from L-glutamate: step 3/4. Functionally, catalyzes the NADPH-dependent reduction of N-acetyl-5-glutamyl phosphate to yield N-acetyl-L-glutamate 5-semialdehyde. This chain is N-acetyl-gamma-glutamyl-phosphate reductase, found in Geobacter sp. (strain M21).